The chain runs to 314 residues: Methionyl-tRNA formyltransferase (314 aa).

Residue 110–113 (SLLP) participates in (6S)-5,6,7,8-tetrahydrofolate binding.

The protein belongs to the Fmt family.

It catalyses the reaction L-methionyl-tRNA(fMet) + (6R)-10-formyltetrahydrofolate = N-formyl-L-methionyl-tRNA(fMet) + (6S)-5,6,7,8-tetrahydrofolate + H(+). Its function is as follows. Attaches a formyl group to the free amino group of methionyl-tRNA(fMet). The formyl group appears to play a dual role in the initiator identity of N-formylmethionyl-tRNA by promoting its recognition by IF2 and preventing the misappropriation of this tRNA by the elongation apparatus. The sequence is that of Methionyl-tRNA formyltransferase from Bacillus cytotoxicus (strain DSM 22905 / CIP 110041 / 391-98 / NVH 391-98).